The chain runs to 643 residues: Aspartic protease 3 (643 aa).

An N-terminal signal peptide occupies residues M1–A31. A compositionally biased stretch (low complexity) spans A87–S99. A disordered region spans residues A87–R116. The region spanning Y281–A600 is the Peptidase A1 domain. Active-site residues include D299 and D490.

Belongs to the peptidase A1 family.

The protein localises to the endomembrane system. Inhibited by 49c, a hydroxyethylamine scaffold-based compound. Functionally, required for the processing-mediated maturation of a subset of microneme proteins, such as MIC6, and rhoptry proteins, such as ROP1. By regulating microneme and rhoptry processing, plays an essential role in the lysis of the host cell membrane during egress and in rhoptry content discharge, which is required for invasion of host cells. This Toxoplasma gondii protein is Aspartic protease 3.